The sequence spans 497 residues: Cysteine desulfurase, mitochondrial (497 aa).

Residues 1–33 constitute a mitochondrion transit peptide; sequence MLKSTATRSITRLSQVYNVPAATYRACLVSRRF. Pyridoxal 5'-phosphate is bound by residues 168-169, asparagine 248, glutamine 276, and 296-298; these read AT and SSH. Lysine 299 carries the N6-(pyridoxal phosphate)lysine modification. Threonine 336 contacts pyridoxal 5'-phosphate. Cysteine 421 acts as the Cysteine persulfide intermediate in catalysis. Residue cysteine 421 coordinates [2Fe-2S] cluster.

It belongs to the class-V pyridoxal-phosphate-dependent aminotransferase family. NifS/IscS subfamily. Pyridoxal 5'-phosphate is required as a cofactor.

It is found in the mitochondrion. The catalysed reaction is (sulfur carrier)-H + L-cysteine = (sulfur carrier)-SH + L-alanine. Its function is as follows. Catalyzes the removal of elemental sulfur from cysteine to produce alanine. It supplies the inorganic sulfur for iron-sulfur (Fe-S) clusters. Plays a role in both tRNA-processing and mitochondrial metabolism. Involved in the 2-thio-modification of both 5-carboxymethylaminomethyl-2-thiouridine in mitochondrial tRNAs and 5-methoxycarbonylmethyl-2-thiouridine (mcm5s2U) in cytoplasmic tRNAs. The sequence is that of Cysteine desulfurase, mitochondrial from Saccharomyces cerevisiae (strain ATCC 204508 / S288c) (Baker's yeast).